The following is a 617-amino-acid chain: Proline--tRNA ligase (617 aa).

It belongs to the class-II aminoacyl-tRNA synthetase family. ProS type 1 subfamily. In terms of assembly, homodimer.

The protein resides in the cytoplasm. The enzyme catalyses tRNA(Pro) + L-proline + ATP = L-prolyl-tRNA(Pro) + AMP + diphosphate. Functionally, catalyzes the attachment of proline to tRNA(Pro) in a two-step reaction: proline is first activated by ATP to form Pro-AMP and then transferred to the acceptor end of tRNA(Pro). As ProRS can inadvertently accommodate and process non-cognate amino acids such as alanine and cysteine, to avoid such errors it has two additional distinct editing activities against alanine. One activity is designated as 'pretransfer' editing and involves the tRNA(Pro)-independent hydrolysis of activated Ala-AMP. The other activity is designated 'posttransfer' editing and involves deacylation of mischarged Ala-tRNA(Pro). The misacylated Cys-tRNA(Pro) is not edited by ProRS. The polypeptide is Proline--tRNA ligase (Streptococcus pneumoniae (strain ATCC BAA-255 / R6)).